The following is a 418-amino-acid chain: CinA-like protein (418 aa).

The protein belongs to the CinA family.

This chain is CinA-like protein, found in Leptospira borgpetersenii serovar Hardjo-bovis (strain L550).